A 216-amino-acid chain; its full sequence is 3-isopropylmalate dehydratase small subunit (216 aa).

The protein belongs to the LeuD family. LeuD type 1 subfamily. Heterodimer of LeuC and LeuD.

It catalyses the reaction (2R,3S)-3-isopropylmalate = (2S)-2-isopropylmalate. It functions in the pathway amino-acid biosynthesis; L-leucine biosynthesis; L-leucine from 3-methyl-2-oxobutanoate: step 2/4. Functionally, catalyzes the isomerization between 2-isopropylmalate and 3-isopropylmalate, via the formation of 2-isopropylmaleate. This is 3-isopropylmalate dehydratase small subunit from Acidovorax ebreus (strain TPSY) (Diaphorobacter sp. (strain TPSY)).